The following is a 240-amino-acid chain: Methylthioribulose-1-phosphate dehydratase (240 aa).

Cysteine 99 serves as a coordination point for substrate. 2 residues coordinate Zn(2+): histidine 116 and histidine 118. Catalysis depends on glutamate 145, which acts as the Proton donor/acceptor. Histidine 201 is a Zn(2+) binding site.

The protein belongs to the aldolase class II family. MtnB subfamily. Zn(2+) is required as a cofactor.

The protein resides in the cytoplasm. It carries out the reaction 5-(methylsulfanyl)-D-ribulose 1-phosphate = 5-methylsulfanyl-2,3-dioxopentyl phosphate + H2O. It participates in amino-acid biosynthesis; L-methionine biosynthesis via salvage pathway; L-methionine from S-methyl-5-thio-alpha-D-ribose 1-phosphate: step 2/6. Functionally, catalyzes the dehydration of methylthioribulose-1-phosphate (MTRu-1-P) into 2,3-diketo-5-methylthiopentyl-1-phosphate (DK-MTP-1-P). This chain is Methylthioribulose-1-phosphate dehydratase, found in Paracoccidioides brasiliensis (strain Pb18).